The sequence spans 179 residues: Large ribosomal subunit protein uL5 (179 aa).

This sequence belongs to the universal ribosomal protein uL5 family. In terms of assembly, part of the 50S ribosomal subunit; part of the 5S rRNA/L5/L18/L25 subcomplex. Contacts the 5S rRNA and the P site tRNA. Forms a bridge to the 30S subunit in the 70S ribosome.

In terms of biological role, this is one of the proteins that bind and probably mediate the attachment of the 5S RNA into the large ribosomal subunit, where it forms part of the central protuberance. In the 70S ribosome it contacts protein S13 of the 30S subunit (bridge B1b), connecting the 2 subunits; this bridge is implicated in subunit movement. Contacts the P site tRNA; the 5S rRNA and some of its associated proteins might help stabilize positioning of ribosome-bound tRNAs. The protein is Large ribosomal subunit protein uL5 of Solidesulfovibrio magneticus (strain ATCC 700980 / DSM 13731 / RS-1) (Desulfovibrio magneticus).